Here is a 304-residue protein sequence, read N- to C-terminus: Granaticin polyketide synthase bifunctional cyclase/dehydratase (304 aa).

Its pathway is antifungal biosynthesis; monensin biosynthesis. Functionally, is needed for correct cyclization of the oligoketide leading to isochromanequinone formation. This chain is Granaticin polyketide synthase bifunctional cyclase/dehydratase, found in Streptomyces virginiae (Streptomyces cinnamonensis).